A 2698-amino-acid chain; its full sequence is Chromodomain-helicase-DNA-binding protein 6 (2698 aa).

Basic and acidic residues-rich tracts occupy residues 1–12 (MKMKIQKKEKQL), 100–115 (EPGEQEGTKASKDREP), and 122–171 (EPKE…KRSC). The disordered stretch occupies residues 1 to 243 (MKMKIQKKEK…KRRSGRQVKR (243 aa)). The segment at 1 to 746 (MKMKIQKKEK…MMELRKCCNH (746 aa)) is required for DNA-dependent ATPase activity. The span at 213-224 (QSLPNPSLQSPE) shows a compositional bias: low complexity. Chromo domains lie at 291–342 (NIIE…KDPR) and 374–438 (IEID…KPVE). One can recognise a Helicase ATP-binding domain in the interval 472-646 (LFNWYNRKNC…FSLLNFLEPS (175 aa)). 485–492 (DEMGLGKT) serves as a coordination point for ATP. A DEAH box motif is present at residues 597-600 (DEAH). The Helicase C-terminal domain maps to 786–955 (LIDKLLPKLI…LSKMEVEDLL (170 aa)). The interval 1318–1370 (SLSAEQGVTDGTSDIPERGNIDKEDSAEDKVDGLQKQTASPSDGSDGIFGEKK) is disordered. Over residues 1320 to 1329 (SAEQGVTDGT) the composition is skewed to polar residues. A compositionally biased stretch (basic and acidic residues) spans 1332-1350 (IPERGNIDKEDSAEDKVDG). A Myb-like domain is found at 1435-1489 (RWTRREQADFYRTVSSFGVVYDQEKEAFDWTQFRAISRLDKKSDENLEHYFHSFV). The segment covering 1707 to 1730 (EPRSFQEAPSTNMQSRKKTVTVSA) has biased composition (polar residues). Residues 1707 to 1731 (EPRSFQEAPSTNMQSRKKTVTVSAS) form a disordered region. Position 1852 is a phosphoserine (Ser1852). Disordered regions lie at residues 1935–2046 (GLGS…ASGI), 2111–2137 (LPTPVLSSSAGSRSSLSEPEATEHSFS), 2308–2337 (TTLNTTHPEGPGAASSASEPTAAASSQAEK), 2359–2387 (PGFGASFSDKPKQRRPRCKEPGKLDIGSL), 2538–2587 (ASLA…PTIT), and 2626–2698 (QGRH…DDTN). Composition is skewed to basic and acidic residues over residues 1943–1955 (GEKPKAYEPDPYR), 1975–1991 (FKLKHELLKEPWKESSE), and 2004–2024 (SEPKSEEMDFENKDDYEKDGA). Composition is skewed to low complexity over residues 2117 to 2127 (SSSAGSRSSLS) and 2315 to 2336 (PEGPGAASSASEPTAAASSQAE). Residues 2538–2550 (ASLASTKSGASAT) show a composition bias toward low complexity. Residues 2552–2573 (KTTEDELSGRDVKADSLVEDKP) are compositionally biased toward basic and acidic residues. Polar residues-rich tracts occupy residues 2578–2587 (FSDQSEPTIT) and 2664–2675 (SDQNCTESSVTV). Residues 2677-2698 (PEREHVAQAREEGLKDSNDDTN) are compositionally biased toward basic and acidic residues.

The protein belongs to the SNF2/RAD54 helicase family. As to quaternary structure, interacts with NFE2L2; involved in activation of the transcription. May interact with PPARA. In terms of tissue distribution, widely expressed.

Its subcellular location is the nucleus. The protein localises to the nucleoplasm. The enzyme catalyses ATP + H2O = ADP + phosphate + H(+). In terms of biological role, ATP-dependent chromatin-remodeling factor. Regulates transcription by disrupting nucleosomes in a largely non-sliding manner which strongly increases the accessibility of chromatin. Activates transcription of specific genes in response to oxidative stress through interaction with NFE2L2. In Rattus norvegicus (Rat), this protein is Chromodomain-helicase-DNA-binding protein 6 (Chd6).